We begin with the raw amino-acid sequence, 305 residues long: MVLDGFAAYFDAYLENIVREGKSEHTVAAYRRDLEELFALLAQMPSEDAGGVPQDLSRRDFTAALRRLSQRGLDGRTLARKLSAWRQYCAWLVKRGLMRADPTADIKPPKQPERVPKALPQEWLNRMLDLPVDGGDPLAVRDHALFELMYGSGLRVSEIHGLNADDVYLDEAWVHVTGKGRKQRQVPLTGKSVEALKNYLPLRQTASDGKALFTGRNGTRLSQRQIQKRLESWAAQYGDGRHVSPHMMRHSYAGHLLQASRDIRAVQELLGHSSLSTTQIYTKLDFDHIARLYDEAHPRAKRQDE.

The region spanning 1–93 is the Core-binding (CB) domain; the sequence is MVLDGFAAYF…AWRQYCAWLV (93 aa). The 181-residue stretch at 114–294 folds into the Tyr recombinase domain; the sequence is RVPKALPQEW…DFDHIARLYD (181 aa). Catalysis depends on residues Arg155, Lys179, His246, Arg249, and His272. The active-site O-(3'-phospho-DNA)-tyrosine intermediate is Tyr281.

Belongs to the 'phage' integrase family. XerC subfamily. In terms of assembly, forms a cyclic heterotetrameric complex composed of two molecules of XerC and two molecules of XerD.

It is found in the cytoplasm. Site-specific tyrosine recombinase, which acts by catalyzing the cutting and rejoining of the recombining DNA molecules. The XerC-XerD complex is essential to convert dimers of the bacterial chromosome into monomers to permit their segregation at cell division. It also contributes to the segregational stability of plasmids. The protein is Tyrosine recombinase XerC of Neisseria gonorrhoeae (strain ATCC 700825 / FA 1090).